The primary structure comprises 606 residues: WD repeat-containing protein 1 (606 aa).

WD repeat units lie at residues Glu4 to Ile45, Pro48 to Thr87, Leu93 to Ser135, Ser138 to Gly176, Lys180 to Gly218, Val224 to Val263, Asn270 to Lys306, Lys311 to Ser351, Ser358 to Val408, Leu432 to Ile474, Lys480 to Val518, Ser523 to Leu561, and Thr566 to Ile604. An N6-acetyllysine mark is found at Lys28, Lys81, Lys95, and Lys115. Residue Tyr238 is modified to Phosphotyrosine. Lys480 is subject to N6-acetyllysine.

The protein belongs to the WD repeat AIP1 family.

It localises to the cytoplasm. It is found in the cytoskeleton. The protein localises to the cell projection. The protein resides in the podosome. In terms of biological role, induces disassembly of actin filaments in conjunction with ADF/cofilin family proteins. Enhances cofilin-mediated actin severing. Involved in cytokinesis. Involved in chemotactic cell migration by restricting lamellipodial membrane protrusions. Involved in myocardium sarcomere organization. Required for cardiomyocyte growth and maintenance. Involved in megakaryocyte maturation and platelet shedding. Required for the establishment of planar cell polarity (PCP) during follicular epithelium development and for cell shape changes during PCP; the function seems to implicate cooperation with CFL1 and/or DSTN/ADF. Involved in the generation/maintenance of cortical tension. Involved in assembly and maintenance of epithelial apical cell junctions and plays a role in the organization of the perijunctional actomyosin belt. This Bos taurus (Bovine) protein is WD repeat-containing protein 1 (WDR1).